A 581-amino-acid chain; its full sequence is Serine/threonine protein phosphatase 2A 55 kDa regulatory subunit B alpha isoform (581 aa).

The segment at 1–27 (MMNPDGGDGDRLEAAGAGSSSAQQGHP) is disordered. Low complexity predominate over residues 14–25 (AAGAGSSSAQQG). WD repeat units lie at residues 47–86 (QEVD…DNAS) and 123–164 (EIEE…VKQV). Over residues 172–189 (RSVGTGTSSSASTSSSRG) the composition is skewed to low complexity. The segment at 172–192 (RSVGTGTSSSASTSSSRGLLP) is disordered. 4 WD repeats span residues 241 to 279 (AHDY…QSFN), 290 to 330 (DLTE…LCDN), 349 to 387 (EIIA…GPVS), and 492 to 530 (DFST…RKFI).

It belongs to the phosphatase 2A regulatory subunit B family. PP2A consists of a common heteromeric enzyme, composed of a catalytic subunit (subunits C), a constant regulatory subunit (subunit A), and a variety of regulatory subunits such as subunits B (the R2/B/PR55/B55, R3/B''/PR72/PR130/PR59 and R5/B'/B56 families).

Functionally, the B regulatory subunit may modulate substrate selectivity and catalytic activity, and may also direct the localization of the catalytic enzyme to a particular subcellular compartment. This Oryza sativa subsp. japonica (Rice) protein is Serine/threonine protein phosphatase 2A 55 kDa regulatory subunit B alpha isoform.